The chain runs to 231 residues: 2-C-methyl-D-erythritol 2,4-cyclodiphosphate synthase, chloroplastic (231 aa).

A chloroplast-targeting transit peptide spans 1 to 52; that stretch reads MATSSTQLLLSSSSLFHSQITKKPFLLPATKIGVWRPKKSLSLSCRPSASVS. A divalent metal cation contacts are provided by aspartate 82 and histidine 84. Substrate contacts are provided by residues 82-84, 108-109, 112-120, 130-132, 135-139, aspartate 139, 174-180, and 205-209; these read DLH, HS, DVLLHCVVD, DIG, FPDSD, LQRPKIS, and AKTHE. An a divalent metal cation-binding site is contributed by histidine 116.

The protein belongs to the IspF family. In terms of assembly, homotrimer. A divalent metal cation is required as a cofactor.

It localises to the plastid. The protein resides in the chloroplast stroma. The catalysed reaction is 4-CDP-2-C-methyl-D-erythritol 2-phosphate = 2-C-methyl-D-erythritol 2,4-cyclic diphosphate + CMP. Its pathway is isoprenoid biosynthesis; isopentenyl diphosphate biosynthesis via DXP pathway; isopentenyl diphosphate from 1-deoxy-D-xylulose 5-phosphate: step 4/6. Functionally, enzyme of the plastid non-mevalonate pathway for isoprenoid biosynthesis that converts 4-diphosphocytidyl-2C-methyl-D-erythritol 2-phosphate into 2C-methyl-D-erythritol 2,4-cyclodiphosphate and CMP. Is essential for chloroplast development. This chain is 2-C-methyl-D-erythritol 2,4-cyclodiphosphate synthase, chloroplastic, found in Arabidopsis thaliana (Mouse-ear cress).